A 1555-amino-acid chain; its full sequence is Bromodomain adjacent to zinc finger domain protein 1A (1555 aa).

Residues 1–128 (MPLLHRKPFV…EETVEVIRNN (128 aa)) are required for association with the CHRAC1/POLE3 complex. Residues 1 to 128 (MPLLHRKPFV…EETVEVIRNN (128 aa)) are required for interaction with the CHRAC1-POLE3 heterodimer. Required for interaction with the CHRAC1-POLE3 heterodimer. The required for interaction with NCOR1 stretch occupies residues 1–133 (MPLLHRKPFV…VIRNNGTRLQ (133 aa)). Residues 22–128 (EEVFYCKVTN…EETVEVIRNN (107 aa)) enclose the WAC domain. Phosphoserine occurs at positions 270 and 284. The DDT domain maps to 422-488 (PEVFGDALMV…LTAIFQAMAE (67 aa)). Residues 635 to 701 (IEDYVDVLRQ…EDEQRNSAAV (67 aa)) adopt a coiled-coil conformation. Basic and acidic residues-rich tracts occupy residues 652 to 664 (LKAE…REAT) and 671 to 696 (RKEE…DEQR). The segment at 652 to 751 (LKAEQHRKER…KRSRRGKVGQ (100 aa)) is disordered. Positions 668–935 (IRRRKEEKLK…QEKSRICAQL (268 aa)) are interaction with SMARCA5. The tract at residues 668 to 935 (IRRRKEEKLK…QEKSRICAQL (268 aa)) is required for interaction with SMARCA5 and formation of the CHRAC ISWI chromatin remodeling complex. 2 stretches are compositionally biased toward acidic residues: residues 705-714 (GEEEREDFDT) and 728-737 (PDVVTEDEDD). Thr-732 carries the post-translational modification Phosphothreonine. The stretch at 773 to 798 (SADAEEALRQEQQQKEKELLDKIQSA) forms a coiled coil. Disordered regions lie at residues 843 to 874 (PSSF…SSLD) and 944 to 969 (HFSD…CDIS). A compositionally biased stretch (low complexity) spans 864 to 873 (SFLSESTSSL). A Glycyl lysine isopeptide (Lys-Gly) (interchain with G-Cter in SUMO2) cross-link involves residue Lys-954. 2 positions are modified to phosphoserine: Ser-962 and Ser-963. A PHD-type zinc finger spans residues 1149-1199 (NARCKICRKKGDAENMVLCDGCDRGHHTYCVRPKLKAVPDGDWFCPECRPK). A disordered region spans residues 1203 to 1429 (RRLSSRQRPS…LNRRSSGRQG (227 aa)). The span at 1214–1258 (ESDEEMEEGMEDDDDEVDDDDEEGQSEEEEYEVEQDEEDSDDDEA) shows a compositional bias: acidic residues. Residues 1263-1277 (KRGRPQVRLPIKTKG) show a composition bias toward basic residues. Ser-1282 carries the phosphoserine modification. The span at 1297–1313 (SRSQQSTPKNTAKSASK) shows a compositional bias: polar residues. Phosphoserine is present on residues Ser-1320, Ser-1339, Ser-1352, Ser-1370, Ser-1401, Ser-1412, and Ser-1416. Positions 1369–1386 (HSPSFTNFRVSTSRSSRQ) are enriched in polar residues. Residues 1429–1532 (GGVHELSAFE…AFFHIQAQKL (104 aa)) form the Bromo domain. A Phosphothreonine modification is found at Thr-1546.

The protein belongs to the WAL family. Component of the ACF-1 ISWI chromatin remodeling complex at least composed of SMARCA1 and BAZ1A, which regulates the spacing of histone octamers on the DNA template to facilitate access to DNA. Within the ACF-1 ISWI chromatin remodeling complex interacts with SMARCA1; the interaction is direct. Component of the ACF-5 ISWI chromatin remodeling complex (also called the ACF complex) at least composed of BAZ1A and SMARCA5/SNF2H, which regulates the spacing of histone octamers on the DNA template to facilitate access to DNA. Within the ACF-5 ISWI chromatin remodeling complex interacts with SMARCA5/SNF2H; the interaction is direct. Component of the CHRAC ISWI chromatin remodeling complex at least composed of SMARCA5/SNF2H, BAZ1A/ACF1, CHRAC1 and POLE3; the complex preferentially binds DNA through the CHRAC1-POLE3 heterodimer and possesses ATP-dependent nucleosome-remodeling activity. Within the complex interacts (via N-terminus) with POLE3-CHRAC1 heterodimer; the interaction is direct and is required for the complex to preferentially bind to DNA. Within the complex interacts with SMARCA5/SNF2H; the interaction is direct and promotes the interaction with the POLE3-CHRAC1 heterodimer. Interacts with NCOR1 (via its RD1 domain); the interaction corepresses a number of NCOR1-regulated genes.

It localises to the nucleus. Functionally, regulatory subunit of the ATP-dependent ACF-1 and ACF-5 ISWI chromatin remodeling complexes, which form ordered nucleosome arrays on chromatin and slide edge- and center-positioned histone octamers away from their original location on the DNA template to facilitate access to DNA during DNA-templated processes such as DNA replication, transcription, and repair. Both complexes regulate the spacing of nucleosomes along the chromatin and have the ability to slide mononucleosomes to the center of a DNA template in an ATP-dependent manner. The ACF-1 ISWI chromatin remodeling complex has a lower ATP hydrolysis rate than the ACF-5 ISWI chromatin remodeling complex. Has a role in sensing the length of DNA which flank nucleosomes, which modulates the nucleosome spacing activity of the ACF-5 ISWI chromatin remodeling complex. Involved in DNA replication and together with SMARCA5/SNF2H is required for replication of pericentric heterochromatin in S-phase. May have a role in nuclear receptor-mediated transcription repression. The polypeptide is Bromodomain adjacent to zinc finger domain protein 1A (Baz1a) (Mus musculus (Mouse)).